Here is a 99-residue protein sequence, read N- to C-terminus: NADH-ubiquinone oxidoreductase chain 4L (99 aa).

3 consecutive transmembrane segments (helical) span residues 5–25, 30–50, and 65–85; these read IITA…GFII, ILLL…IIIC, and LYIL…LVLF.

This sequence belongs to the complex I subunit 4L family.

It is found in the mitochondrion membrane. The enzyme catalyses a ubiquinone + NADH + 5 H(+)(in) = a ubiquinol + NAD(+) + 4 H(+)(out). Functionally, core subunit of the mitochondrial membrane respiratory chain NADH dehydrogenase (Complex I) that is believed to belong to the minimal assembly required for catalysis. Complex I functions in the transfer of electrons from NADH to the respiratory chain. The immediate electron acceptor for the enzyme is believed to be ubiquinone. The protein is NADH-ubiquinone oxidoreductase chain 4L (ND4L) of Allomyces macrogynus.